A 611-amino-acid chain; its full sequence is Ankyrin repeat protein SKIP35 (611 aa).

6 ANK repeats span residues 292-322 (LFSN…EGGA), 323-353 (DNVN…RNSL), 356-384 (DVDL…NAIA), 385-414 (FLGP…DMEL), 416-442 (LALT…PPVL), and 445-478 (LSIE…DSTA).

Interacts with SKP1A/ASK1.

In Arabidopsis thaliana (Mouse-ear cress), this protein is Ankyrin repeat protein SKIP35 (SKIP35).